The primary structure comprises 335 residues: Ketol-acid reductoisomerase (NADP(+)) 2 (335 aa).

The region spanning 1–180 (MKTYYEQDAN…GCTRAGVIET (180 aa)) is the KARI N-terminal Rossmann domain. Residues 24 to 27 (YGSQ), R47, S51, and 81 to 84 (DEQQ) each bind NADP(+). H106 is an active-site residue. G132 lines the NADP(+) pocket. The region spanning 181–326 (TFQEETETDL…EELREMMSWI (146 aa)) is the KARI C-terminal knotted domain. Residues D189, E193, E225, and E229 each coordinate Mg(2+). A substrate-binding site is contributed by S250.

Belongs to the ketol-acid reductoisomerase family. The cofactor is Mg(2+).

The enzyme catalyses (2R)-2,3-dihydroxy-3-methylbutanoate + NADP(+) = (2S)-2-acetolactate + NADPH + H(+). It carries out the reaction (2R,3R)-2,3-dihydroxy-3-methylpentanoate + NADP(+) = (S)-2-ethyl-2-hydroxy-3-oxobutanoate + NADPH + H(+). Its pathway is amino-acid biosynthesis; L-isoleucine biosynthesis; L-isoleucine from 2-oxobutanoate: step 2/4. It participates in amino-acid biosynthesis; L-valine biosynthesis; L-valine from pyruvate: step 2/4. In terms of biological role, involved in the biosynthesis of branched-chain amino acids (BCAA). Catalyzes an alkyl-migration followed by a ketol-acid reduction of (S)-2-acetolactate (S2AL) to yield (R)-2,3-dihydroxy-isovalerate. In the isomerase reaction, S2AL is rearranged via a Mg-dependent methyl migration to produce 3-hydroxy-3-methyl-2-ketobutyrate (HMKB). In the reductase reaction, this 2-ketoacid undergoes a metal-dependent reduction by NADPH to yield (R)-2,3-dihydroxy-isovalerate. The polypeptide is Ketol-acid reductoisomerase (NADP(+)) 2 (Bacillus thuringiensis subsp. konkukian (strain 97-27)).